The primary structure comprises 117 residues: Nascent polypeptide-associated complex protein (117 aa).

The NAC-A/B domain maps to 9–77 (PKQLKQMQRA…ARECDLEAEV (69 aa)).

This sequence belongs to the NAC-alpha family. In terms of assembly, homodimer. Interacts with the ribosome. Binds ribosomal RNA.

In terms of biological role, contacts the emerging nascent chain on the ribosome. This Methanothermobacter marburgensis (strain ATCC BAA-927 / DSM 2133 / JCM 14651 / NBRC 100331 / OCM 82 / Marburg) (Methanobacterium thermoautotrophicum) protein is Nascent polypeptide-associated complex protein.